The chain runs to 352 residues: Alanine racemase (352 aa).

Lys-33 acts as the Proton acceptor; specific for D-alanine in catalysis. Lys-33 is modified (N6-(pyridoxal phosphate)lysine). Arg-129 is a binding site for substrate. The active-site Proton acceptor; specific for L-alanine is Tyr-250. Met-298 is a substrate binding site.

This sequence belongs to the alanine racemase family. Requires pyridoxal 5'-phosphate as cofactor.

It catalyses the reaction L-alanine = D-alanine. The protein operates within amino-acid biosynthesis; D-alanine biosynthesis; D-alanine from L-alanine: step 1/1. In terms of biological role, catalyzes the interconversion of L-alanine and D-alanine. May also act on other amino acids. This Neisseria meningitidis serogroup C / serotype 2a (strain ATCC 700532 / DSM 15464 / FAM18) protein is Alanine racemase (alr).